The sequence spans 174 residues: Crossover junction endodeoxyribonuclease RuvC (174 aa).

Residues Asp16, Glu76, and Asp148 contribute to the active site. Residues Asp16, Glu76, and Asp148 each contribute to the Mg(2+) site.

This sequence belongs to the RuvC family. As to quaternary structure, homodimer which binds Holliday junction (HJ) DNA. The HJ becomes 2-fold symmetrical on binding to RuvC with unstacked arms; it has a different conformation from HJ DNA in complex with RuvA. In the full resolvosome a probable DNA-RuvA(4)-RuvB(12)-RuvC(2) complex forms which resolves the HJ. The cofactor is Mg(2+).

Its subcellular location is the cytoplasm. It catalyses the reaction Endonucleolytic cleavage at a junction such as a reciprocal single-stranded crossover between two homologous DNA duplexes (Holliday junction).. Its function is as follows. The RuvA-RuvB-RuvC complex processes Holliday junction (HJ) DNA during genetic recombination and DNA repair. Endonuclease that resolves HJ intermediates. Cleaves cruciform DNA by making single-stranded nicks across the HJ at symmetrical positions within the homologous arms, yielding a 5'-phosphate and a 3'-hydroxyl group; requires a central core of homology in the junction. The consensus cleavage sequence is 5'-(A/T)TT(C/G)-3'. Cleavage occurs on the 3'-side of the TT dinucleotide at the point of strand exchange. HJ branch migration catalyzed by RuvA-RuvB allows RuvC to scan DNA until it finds its consensus sequence, where it cleaves and resolves the cruciform DNA. This chain is Crossover junction endodeoxyribonuclease RuvC, found in Rhodopseudomonas palustris (strain BisA53).